The primary structure comprises 596 residues: MSESCANPLLLEWIKEWLDQARERNSKGVTVYKKAYESMKACPLVFQHPSEAQQLNGLGPKLCERLTEKLKAYCEENGLPMPEHPQKAAASKRTSDEGVDDPPAKKPRKAKPYVPSLRSGPYALLLGLATLDENASQGLTKAQLIEKAQPYCDSSFTAPPDPSKFYTAWNSMKTLLQKELVYEHGRPLRRYALTEEGWEVAKRIKKTLPGGDLNTLAFRHQTGILSIEQGDSSTHVRSNTSTSAAPGPRDNDNNIVAQESLNGNNDEPIQIQDNDRGRDPIDEIGIEPIILPANSFTIQLVLDTREVRSSKDRDYIANELSKKGITPEVRALELGDAMWVARCNDPTFLSQYGEECNEVMLDWIVERKRMDDLLGSIKDGRFHEQKFRLRRSGIKNVIYLIEEFAITHDVGSASAMKYQEMMASAIASTQVVNGYFVKQTRNLDDTIRYLARMTYLLQKMYCFSPPTHTLSLIPSRQLSSAQSYLTTLERLRARDPSVTYSVTFSTFSALTSKSDILSLRDVFLKMLMCTRGVTGEKALAIQKRWSTPREFVEAFERLDEKGREDMVFERTKTLVGRKKMGKVLSKKIADIWGTGG.

2 disordered regions span residues 77–113 (NGLP…AKPY) and 228–278 (EQGD…DRGR). 2 stretches are compositionally biased toward polar residues: residues 229–244 (QGDS…STSA) and 253–267 (NNIV…NNDE). The ERCC4 domain maps to 299–405 (QLVLDTREVR…NVIYLIEEFA (107 aa)).

This sequence belongs to the XPF family. As to quaternary structure, interacts with eme1. Mg(2+) serves as cofactor.

The protein localises to the nucleus. Functionally, interacts with eme1 to form a DNA structure-specific endonuclease with substrate preference for branched DNA structures with a 5'-end at the branch nick. Typical substrates include 3'-flap structures, D-loops, replication forks and nicked Holliday junctions. May be required in mitosis for the processing of stalled or collapsed replication fork intermediates. May be required in meiosis for the repair of meiosis-specific double strand breaks subsequent to single-end invasion (SEI). The sequence is that of Crossover junction endonuclease mus81 (mus81) from Aspergillus fumigatus (strain ATCC MYA-4609 / CBS 101355 / FGSC A1100 / Af293) (Neosartorya fumigata).